We begin with the raw amino-acid sequence, 300 residues long: Protoheme IX farnesyltransferase (300 aa).

Transmembrane regions (helical) follow at residues 24 to 44, 46 to 66, 94 to 114, 118 to 138, 146 to 166, 172 to 192, 217 to 237, 239 to 259, and 278 to 298; these read VTQL…PGMV, WHVL…AFAI, PQIL…LYTF, LTMW…TLLL, IVIG…AVTG, AWIL…VLAL, LHIL…FISG, SGAV…AYAW, and IVYL…RPLL.

The protein belongs to the UbiA prenyltransferase family. Protoheme IX farnesyltransferase subfamily.

It localises to the cell inner membrane. The catalysed reaction is heme b + (2E,6E)-farnesyl diphosphate + H2O = Fe(II)-heme o + diphosphate. The protein operates within porphyrin-containing compound metabolism; heme O biosynthesis; heme O from protoheme: step 1/1. Converts heme B (protoheme IX) to heme O by substitution of the vinyl group on carbon 2 of heme B porphyrin ring with a hydroxyethyl farnesyl side group. In Burkholderia cenocepacia (strain HI2424), this protein is Protoheme IX farnesyltransferase.